A 248-amino-acid polypeptide reads, in one-letter code: Pulmonary surfactant-associated protein A (248 aa).

A signal peptide spans Met-1–Cys-20. The N-linked (GlcNAc...) asparagine glycan is linked to Asn-21. A Collagen-like domain is found at Gly-28–Pro-100. The segment at Gly-28–Pro-100 is disordered. 4-hydroxyproline occurs at positions 30, 33, 36, 42, 54, 57, 63, 67, 70, and 76. Residues Pro-42–Lys-51 are compositionally biased toward basic and acidic residues. A compositionally biased stretch (pro residues) spans Pro-54–Gly-65. Positions Leu-69–Pro-82 are enriched in low complexity. The segment covering Glu-84–Glu-93 has biased composition (basic and acidic residues). The C-type lectin domain maps to Leu-132–Phe-248. 2 disulfides stabilise this stretch: Cys-155–Cys-246 and Cys-224–Cys-238. Asn-207 is a glycosylation site (N-linked (GlcNAc...) asparagine). Ca(2+) is bound by residues Glu-215, Arg-217, Asn-234, and Asp-235.

The protein belongs to the SFTPA family. As to quaternary structure, oligomeric complex of 6 set of homotrimers.

It localises to the secreted. Its subcellular location is the extracellular space. The protein localises to the extracellular matrix. It is found in the surface film. Its function is as follows. In presence of calcium ions, it binds to surfactant phospholipids and contributes to lower the surface tension at the air-liquid interface in the alveoli of the mammalian lung and is essential for normal respiration. Enhances the expression of MYO18A/SP-R210 on alveolar macrophages. The polypeptide is Pulmonary surfactant-associated protein A (Sftpa1) (Mus musculus (Mouse)).